Reading from the N-terminus, the 59-residue chain is UPF0181 protein CKO_01169 (59 aa).

It belongs to the UPF0181 family.

The sequence is that of UPF0181 protein CKO_01169 from Citrobacter koseri (strain ATCC BAA-895 / CDC 4225-83 / SGSC4696).